A 342-amino-acid polypeptide reads, in one-letter code: MRVLGLETSCDETGVAVYDSAQGLLAHRLYSQVKLHAEYGGVVPELASRDHVRKLLPLIDEVMAASGSTAADIDAIAYTAGPGLIGALMVGAAFGRSLAYAWGIPAVGVHHMEGHLLAPMLEAVPPEFPFVALLVSGGHTQLVKVMAIGDYELLGESIDDAAGEAFDKAAKMLDLDYPGGPQIARLAEQGVHGRFKFPRPMVDRPGLAFSFSGLKTATLTAVNAHKQANGLPDDQTCADIACAFQEAVVDTLVIKCRRALEQTGMKTLVIAGGVSANKKLRADLEVELARIGARVFYARHEFCTDNGAMIAYAGCQRLLAGQQEGLAIHVKARWPLNSLSSL.

Residues H111 and H115 each contribute to the Fe cation site. Residues 134–138 (LVSGG), D167, G180, and N277 each bind substrate. Residue D305 participates in Fe cation binding.

This sequence belongs to the KAE1 / TsaD family. It depends on Fe(2+) as a cofactor.

Its subcellular location is the cytoplasm. The catalysed reaction is L-threonylcarbamoyladenylate + adenosine(37) in tRNA = N(6)-L-threonylcarbamoyladenosine(37) in tRNA + AMP + H(+). Required for the formation of a threonylcarbamoyl group on adenosine at position 37 (t(6)A37) in tRNAs that read codons beginning with adenine. Is involved in the transfer of the threonylcarbamoyl moiety of threonylcarbamoyl-AMP (TC-AMP) to the N6 group of A37, together with TsaE and TsaB. TsaD likely plays a direct catalytic role in this reaction. The chain is tRNA N6-adenosine threonylcarbamoyltransferase from Cellvibrio japonicus (strain Ueda107) (Pseudomonas fluorescens subsp. cellulosa).